The chain runs to 260 residues: Recombination-promoting nuclease RpnD (260 aa).

The protein belongs to the Rpn/YhgA-like nuclease family.

Functionally, a low activity DNA endonuclease probably yielding 3'-hydroxyl ends. Involved in RecA-independent recombination and horizontal gene transfer. In Escherichia coli O157:H7, this protein is Recombination-promoting nuclease RpnD (rpnD).